The primary structure comprises 194 residues: Cysteine and glycine-rich protein 2 (194 aa).

One can recognise an LIM zinc-binding 1 domain in the interval 10 to 61 (CGACGRTVYHAEEVQCDGRSFHRCCFLCMVCRKNLDSTTVAIHDAEVYCKSC). The Nuclear localization signal motif lies at 64–69 (KKYGPK). Residues 120–171 (CSRCGDSVYAAEKVIGAGKPWHKNCFRCAKCGKSLESTTLTEKEGEIYCKGC) form the LIM zinc-binding 2 domain.

The protein resides in the nucleus. In terms of biological role, totally down-regulated in transformed cells. May therefore take part in the control of cell growth and differentiation. This is Cysteine and glycine-rich protein 2 (CSRP2) from Gallus gallus (Chicken).